The primary structure comprises 454 residues: Tubulin alpha chain (454 aa).

Positions 12, 72, 141, 145, 146, 180, 207, and 229 each coordinate GTP. Aspartate 72 provides a ligand contact to Mg(2+). The active site involves glutamate 255.

It belongs to the tubulin family. Dimer of alpha and beta chains. A typical microtubule is a hollow water-filled tube with an outer diameter of 25 nm and an inner diameter of 15 nM. Alpha-beta heterodimers associate head-to-tail to form protofilaments running lengthwise along the microtubule wall with the beta-tubulin subunit facing the microtubule plus end conferring a structural polarity. Microtubules usually have 13 protofilaments but different protofilament numbers can be found in some organisms and specialized cells. Mg(2+) is required as a cofactor.

It is found in the cytoplasm. The protein localises to the cytoskeleton. The catalysed reaction is GTP + H2O = GDP + phosphate + H(+). Functionally, tubulin is the major constituent of microtubules, a cylinder consisting of laterally associated linear protofilaments composed of alpha- and beta-tubulin heterodimers. Microtubules grow by the addition of GTP-tubulin dimers to the microtubule end, where a stabilizing cap forms. Below the cap, tubulin dimers are in GDP-bound state, owing to GTPase activity of alpha-tubulin. The protein is Tubulin alpha chain (TUB1) of Colletotrichum orbiculare (strain 104-T / ATCC 96160 / CBS 514.97 / LARS 414 / MAFF 240422) (Cucumber anthracnose fungus).